We begin with the raw amino-acid sequence, 438 residues long: Glutaryl-CoA dehydrogenase, mitochondrial (438 aa).

A mitochondrion-targeting transit peptide spans methionine 1–serine 44. Residues arginine 138–serine 139 and serine 186 each bind substrate. Residues phenylalanine 177–serine 186, serine 186, and tryptophan 212–threonine 214 each bind FAD. Lysine 240 is modified (N6-acetyllysine). Phenylalanine 287–arginine 294 serves as a coordination point for substrate. FAD-binding positions include arginine 319, glutamine 330, and aspartate 387 to glycine 391. Glutamate 414 acts as the Proton acceptor in catalysis. Glycine 415 lines the substrate pocket. FAD contacts are provided by residues threonine 416, threonine 416–aspartate 418, and phenylalanine 434.

This sequence belongs to the acyl-CoA dehydrogenase family. As to quaternary structure, homotetramer. FAD is required as a cofactor.

The protein localises to the mitochondrion matrix. The enzyme catalyses glutaryl-CoA + oxidized [electron-transfer flavoprotein] + 2 H(+) = (2E)-butenoyl-CoA + reduced [electron-transfer flavoprotein] + CO2. It functions in the pathway amino-acid metabolism; lysine degradation. Its pathway is amino-acid metabolism; tryptophan metabolism. Its function is as follows. Catalyzes the oxidative decarboxylation of glutaryl-CoA to crotonyl-CoA and CO(2) in the degradative pathway of L-lysine, L-hydroxylysine, and L-tryptophan metabolism. It uses electron transfer flavoprotein as its electron acceptor. The protein is Glutaryl-CoA dehydrogenase, mitochondrial (GCDH) of Bos taurus (Bovine).